We begin with the raw amino-acid sequence, 274 residues long: Oxidoreductase stcQ (274 aa).

It belongs to the avfA family.

The protein operates within mycotoxin biosynthesis; sterigmatocystin biosynthesis. In terms of biological role, oxidoreductase; part of the gene cluster that mediates the biosynthesis of sterigmatocystin (ST), a polyketide-derived furanocoumarin which is part of the most toxic and carcinogenic compounds among the known mycotoxins. The first step in the biosynthesis of sterigmatocystin is the production of hexanoate by the fatty acid synthase (FAS) units stcJ and stcK. The polyketide backbone is assembled by the non-reducing polyketide synthase stcA by condensation of the starter hexanoyl-CoA and 7 malonyl-CoA extender units followed by cyclization and release of norsolorinic acid. Norsolorinic acid is the first stable intermediate in the biosynthesis of sterigmatocystin and is converted into averantin (AVN) by the ketoreductase stcE which reduces the hexanoate ketone to an alcohol. Averantin is then oxidized into 5'-hydroxyaverantin (HAVN) by the cytochrome P450 monooxygenase stcF. 5'-hydroxyaverantin is further converted to 5'-oxyaverantin (OAVN) by the 5'-hydroxyaverantin dehydrogenase stcG. The next step is the conversion of OAVN into averufin (AVF) which is catalyzed by a yet to be identified enzyme. The cytochrome P450 monooxygenase stcB and the flavin-binding monooxygenase stcW are both required for the conversion of averufin to 1-hydroxyversicolorone. The esterase stcI probably catalyzes the formation of versiconal hemiacetal acetate from 1-hydroxyversicolorone. The oxydoreductase stcN then probably catalyzes the biosynthetic step from versiconal to versicolorin B (VERB). The next step is performed by the versicolorin B desaturase stcL to produce versicolorin A (VERA). The ketoreductase stcU and the cytochrome P450 monooxygenase stcS are involved in the conversion of versicolorin A to demethylsterigmatocystin. The Baeyer-Villiger oxidas stcQ and the reductase stcR might be involved in the biosynthetic step from versicolorin A to demethylsterigmatocystin. The final step in the biosynthesis of sterigmatocystin is the methylation of demethylsterigmatocystin catalyzed by the methyltransferase stcP. This is Oxidoreductase stcQ from Emericella nidulans (strain FGSC A4 / ATCC 38163 / CBS 112.46 / NRRL 194 / M139) (Aspergillus nidulans).